The chain runs to 330 residues: Spondin-2 (330 aa).

The first 25 residues, 1–25, serve as a signal peptide directing secretion; that stretch reads MENVSFSLDRTLWVFLLAMLGSTAG. One can recognise a Spondin domain in the interval 30 to 220; that stretch reads GESVCTARPL…EITASSPSHP (191 aa). Cysteines 34 and 170 form a disulfide. Residue Glu-140 coordinates a divalent metal cation. Residues Asp-159, Asp-187, and Asp-191 each contribute to the Ca(2+) site. One can recognise a TSP type-1 domain in the interval 276–330; it reads DCEVSLWSSWGLCGGPCGKLGAKSRTRYVRVQPANNGTPCPELEEEAECAPDNCV. A C-linked (Man) tryptophan glycan is attached at Trp-282.

As to quaternary structure, monomer. Interacts with integrin. In terms of tissue distribution, abundantly expressed in the developing hippocampus.

Its subcellular location is the secreted. The protein resides in the extracellular space. It localises to the extracellular matrix. Functionally, cell adhesion protein that promotes adhesion and outgrowth of hippocampal embryonic neurons. Binds directly to bacteria and their components and functions as an opsonin for macrophage phagocytosis of bacteria. Essential in the initiation of the innate immune response and represents a unique pattern-recognition molecule in the ECM for microbial pathogens. The protein is Spondin-2 (Spon2) of Rattus norvegicus (Rat).